The chain runs to 387 residues: EARP-interacting protein homolog (387 aa).

WD repeat units lie at residues 132 to 172, 182 to 222, 226 to 266, and 270 to 310; these read TAHG…TKSV, KGQL…QIYC, AHGQ…EPVK, and EHSH…SEPF. The disordered stretch occupies residues 311–339; sequence GHLVDDEDLSDQEDNPQEEKTKEPLQDSI. Over residues 315–326 the composition is skewed to acidic residues; the sequence is DDEDLSDQEDNP. Residues 345-385 form a WD 5 repeat; the sequence is EHEDSVYAVEWSSADPWLFASLSYDGRLVINRVPRALKYNI.

This sequence belongs to the WD repeat EIPR1 family.

Its subcellular location is the golgi apparatus. The protein localises to the trans-Golgi network. Functionally, may act as a component of endosomal retrieval machinery that is involved in protein transport from early endosomes to either recycling endosomes or the trans-Golgi network. The sequence is that of EARP-interacting protein homolog from Xenopus laevis (African clawed frog).